Consider the following 332-residue polypeptide: Ketol-acid reductoisomerase (NADP(+)) (332 aa).

Residues 1 to 182 (MAVIYYDKDC…GSNRAGVLET (182 aa)) enclose the KARI N-terminal Rossmann domain. NADP(+) is bound by residues 25–28 (YGAQ) and 83–86 (DTSQ). Residue histidine 108 is part of the active site. Glycine 134 serves as a coordination point for NADP(+). Positions 183–328 (TFAEETETDL…AELRSMMSWL (146 aa)) constitute a KARI C-terminal knotted domain. Mg(2+) is bound by residues aspartate 191, glutamate 195, glutamate 227, and glutamate 231. Serine 252 is a binding site for substrate.

It belongs to the ketol-acid reductoisomerase family. The cofactor is Mg(2+).

It carries out the reaction (2R)-2,3-dihydroxy-3-methylbutanoate + NADP(+) = (2S)-2-acetolactate + NADPH + H(+). The enzyme catalyses (2R,3R)-2,3-dihydroxy-3-methylpentanoate + NADP(+) = (S)-2-ethyl-2-hydroxy-3-oxobutanoate + NADPH + H(+). It functions in the pathway amino-acid biosynthesis; L-isoleucine biosynthesis; L-isoleucine from 2-oxobutanoate: step 2/4. Its pathway is amino-acid biosynthesis; L-valine biosynthesis; L-valine from pyruvate: step 2/4. Its function is as follows. Involved in the biosynthesis of branched-chain amino acids (BCAA). Catalyzes an alkyl-migration followed by a ketol-acid reduction of (S)-2-acetolactate (S2AL) to yield (R)-2,3-dihydroxy-isovalerate. In the isomerase reaction, S2AL is rearranged via a Mg-dependent methyl migration to produce 3-hydroxy-3-methyl-2-ketobutyrate (HMKB). In the reductase reaction, this 2-ketoacid undergoes a metal-dependent reduction by NADPH to yield (R)-2,3-dihydroxy-isovalerate. This Dehalococcoides mccartyi (strain ATCC BAA-2266 / KCTC 15142 / 195) (Dehalococcoides ethenogenes (strain 195)) protein is Ketol-acid reductoisomerase (NADP(+)).